A 503-amino-acid polypeptide reads, in one-letter code: Glycerol kinase (503 aa).

Thr17 contacts ADP. ATP is bound by residues Thr17, Thr18, and Ser19. Position 17 (Thr17) interacts with sn-glycerol 3-phosphate. Residue Arg21 participates in ADP binding. Arg87, Glu88, Tyr141, and Asp245 together coordinate sn-glycerol 3-phosphate. The glycerol site is built by Arg87, Glu88, Tyr141, Asp245, and Gln246. 2 residues coordinate ADP: Thr267 and Gly310. ATP contacts are provided by Thr267, Gly310, Gln314, and Gly411. Residues Gly411 and Asn415 each coordinate ADP.

Belongs to the FGGY kinase family.

It catalyses the reaction glycerol + ATP = sn-glycerol 3-phosphate + ADP + H(+). Its pathway is polyol metabolism; glycerol degradation via glycerol kinase pathway; sn-glycerol 3-phosphate from glycerol: step 1/1. Its activity is regulated as follows. Inhibited by fructose 1,6-bisphosphate (FBP). Key enzyme in the regulation of glycerol uptake and metabolism. Catalyzes the phosphorylation of glycerol to yield sn-glycerol 3-phosphate. In Pseudomonas tolaasii, this protein is Glycerol kinase.